A 240-amino-acid polypeptide reads, in one-letter code: Large ribosomal subunit protein bL25 (240 aa).

Disordered stretches follow at residues 1-20 (MAEN…GPAR) and 204-240 (GAAP…KAKK). Low complexity predominate over residues 204–229 (GAAPAAGAAAPAGGAAPAAGAAPAKG). Residues 230–240 (GEAKGGDKAKK) show a composition bias toward basic and acidic residues.

This sequence belongs to the bacterial ribosomal protein bL25 family. CTC subfamily. As to quaternary structure, part of the 50S ribosomal subunit; part of the 5S rRNA/L5/L18/L25 subcomplex. Contacts the 5S rRNA. Binds to the 5S rRNA independently of L5 and L18.

Its function is as follows. This is one of the proteins that binds to the 5S RNA in the ribosome where it forms part of the central protuberance. This chain is Large ribosomal subunit protein bL25, found in Anaeromyxobacter sp. (strain K).